The primary structure comprises 159 residues: Nucleotide-binding protein Psyr_4087 (159 aa).

It belongs to the YajQ family.

In terms of biological role, nucleotide-binding protein. The polypeptide is Nucleotide-binding protein Psyr_4087 (Pseudomonas syringae pv. syringae (strain B728a)).